The chain runs to 127 residues: MORF4 family-associated protein 1 (127 aa).

The disordered stretch occupies residues 76 to 97; the sequence is ESALNHLQNPDDGAEGRGTKRC. Residues 92–126 are a coiled coil; that stretch reads RGTKRCEKAEEKAKEIAKMAEMLVELVRRIEKSES.

It belongs to the MORF4 family-associated protein family. As to quaternary structure, found in a complex composed of MORF4L1, MRFAP1 and RB1. Interacts via its N-terminus with MORF4L1. Interacts with CSTB and MORF4L2.

It localises to the nucleus. It is found in the cytoplasm. The protein resides in the perinuclear region. This Bos taurus (Bovine) protein is MORF4 family-associated protein 1.